A 430-amino-acid polypeptide reads, in one-letter code: MAARLLRGSLRFLGGHCAARPLPALRCSHSGGEERLETPSAKNLTDIGIRRIFSSEHDIFRKSIRKFFQEEVIPHHSEWEKAGEVSREVWEKAGKQGLLGVNIAEHLGGIGGDLYYAAVVWEEQAYSNCSGPGFSVHSGIVMSYITNYGSEEQIKHFIPQMTAGKCIGAIAMTELGAGSDLQGIKTNAKKDGSDWILNGSKVFISNGWLSDVVIVVAVTNHEAPSPARGISLFLVENGMKGFIKGRKLHKMGLKAQDTAELFFEDVRLPASALLGEENKGFYYIMKELPQERLLIADMAVSASEFMFEETRNYVKQRKAFGKTVAHLQTVQHKLAELKTHICVTRAFVDNCLQLHEAKRLDSATACMAKYWASELQNSVAYDCVQLHGGWGYMWEYPIAKAYVDARVQPIYGGTNEIMKELIAREIVFDK.

The N-terminal 30 residues, 1-30, are a transit peptide targeting the mitochondrion; it reads MAARLLRGSLRFLGGHCAARPLPALRCSHS. Lysine 42 carries the N6-acetyllysine modification. Phosphoserine is present on residues serine 54 and serine 55. 2 positions are modified to N6-acetyllysine; alternate: lysine 66 and lysine 81. 2 positions are modified to N6-succinyllysine; alternate: lysine 66 and lysine 81. N6-acetyllysine is present on residues lysine 92 and lysine 95. An N6-succinyllysine modification is found at lysine 165. FAD is bound by residues 170 to 179 and 203 to 205; these read IAMTELGAGS and FIS. Residue serine 179 coordinates substrate. Residue 227–228 coordinates substrate; sequence AR. Lysine 240 bears the N6-succinyllysine mark. An N6-acetyllysine; alternate mark is found at lysine 254 and lysine 279. Residues lysine 254 and lysine 279 each carry the N6-succinyllysine; alternate modification. Residues tyrosine 282 and 289–292 each bind substrate; that span reads PQER. The active-site Proton acceptor is glutamate 291. FAD is bound at residue arginine 317. Lysine 318 carries the post-translational modification N6-acetyllysine. Position 322 is an N6-acetyllysine; alternate (lysine 322). Residue lysine 322 is modified to N6-succinyllysine; alternate. An FAD-binding site is contributed by glutamine 328. Lysine 358 carries the N6-acetyllysine modification. The residue at position 362 (serine 362) is a Phosphoserine. 385–389 contributes to the FAD binding site; that stretch reads QLHGG. Position 412–413 (412–413) interacts with substrate; the sequence is GG. 414–416 is a binding site for FAD; it reads TNE.

Belongs to the acyl-CoA dehydrogenase family. In terms of assembly, homotetramer. The cofactor is FAD. Post-translationally, acetylation at Lys-318 and Lys-322 in proximity of the cofactor-binding sites strongly reduces catalytic activity. These sites are deacetylated by SIRT3.

Its subcellular location is the mitochondrion matrix. The catalysed reaction is a long-chain 2,3-saturated fatty acyl-CoA + oxidized [electron-transfer flavoprotein] + H(+) = a long-chain (2E)-enoyl-CoA + reduced [electron-transfer flavoprotein]. It carries out the reaction hexanoyl-CoA + oxidized [electron-transfer flavoprotein] + H(+) = (2E)-hexenoyl-CoA + reduced [electron-transfer flavoprotein]. It catalyses the reaction octanoyl-CoA + oxidized [electron-transfer flavoprotein] + H(+) = (2E)-octenoyl-CoA + reduced [electron-transfer flavoprotein]. The enzyme catalyses decanoyl-CoA + oxidized [electron-transfer flavoprotein] + H(+) = (2E)-decenoyl-CoA + reduced [electron-transfer flavoprotein]. The catalysed reaction is dodecanoyl-CoA + oxidized [electron-transfer flavoprotein] + H(+) = (2E)-dodecenoyl-CoA + reduced [electron-transfer flavoprotein]. It carries out the reaction tetradecanoyl-CoA + oxidized [electron-transfer flavoprotein] + H(+) = (2E)-tetradecenoyl-CoA + reduced [electron-transfer flavoprotein]. It catalyses the reaction oxidized [electron-transfer flavoprotein] + hexadecanoyl-CoA + H(+) = (2E)-hexadecenoyl-CoA + reduced [electron-transfer flavoprotein]. The enzyme catalyses octadecanoyl-CoA + oxidized [electron-transfer flavoprotein] + H(+) = (2E)-octadecenoyl-CoA + reduced [electron-transfer flavoprotein]. The catalysed reaction is eicosanoyl-CoA + oxidized [electron-transfer flavoprotein] + H(+) = (2E)-eicosenoyl-CoA + reduced [electron-transfer flavoprotein]. It carries out the reaction docosanoyl-CoA + oxidized [electron-transfer flavoprotein] + H(+) = (2E)-docosenoyl-CoA + reduced [electron-transfer flavoprotein]. It catalyses the reaction tetracosanoyl-CoA + oxidized [electron-transfer flavoprotein] + H(+) = (2E)-tetracosenoyl-CoA + reduced [electron-transfer flavoprotein]. The enzyme catalyses (5E)-tetradecenoyl-CoA + oxidized [electron-transfer flavoprotein] + H(+) = (2E,5E)-tetradecadienoyl-CoA + reduced [electron-transfer flavoprotein]. The catalysed reaction is (5Z)-tetradecenoyl-CoA + oxidized [electron-transfer flavoprotein] + H(+) = (2E,5Z)-tetradecadienoyl-CoA + reduced [electron-transfer flavoprotein]. It carries out the reaction oxidized [electron-transfer flavoprotein] + (9Z)-octadecenoyl-CoA + H(+) = (2E,9Z)-octadecadienoyl-CoA + reduced [electron-transfer flavoprotein]. The protein operates within lipid metabolism; mitochondrial fatty acid beta-oxidation. In terms of biological role, long-chain specific acyl-CoA dehydrogenase is one of the acyl-CoA dehydrogenases that catalyze the first step of mitochondrial fatty acid beta-oxidation, an aerobic process breaking down fatty acids into acetyl-CoA and allowing the production of energy from fats. The first step of fatty acid beta-oxidation consists in the removal of one hydrogen from C-2 and C-3 of the straight-chain fatty acyl-CoA thioester, resulting in the formation of trans-2-enoyl-CoA. Among the different mitochondrial acyl-CoA dehydrogenases, long-chain specific acyl-CoA dehydrogenase can act on saturated and unsaturated acyl-CoAs with 6 to 24 carbons with a preference for 8 to 18 carbons long primary chains. In Macaca fascicularis (Crab-eating macaque), this protein is Long-chain specific acyl-CoA dehydrogenase, mitochondrial.